A 357-amino-acid polypeptide reads, in one-letter code: Peptide chain release factor 1 (357 aa).

Glutamine 232 is subject to N5-methylglutamine. Basic and acidic residues predominate over residues 282–291; the sequence is KQRAEQEAAR. The segment at 282-302 is disordered; that stretch reads KQRAEQEAARRSQVGTGDRSE.

Belongs to the prokaryotic/mitochondrial release factor family. Post-translationally, methylated by PrmC. Methylation increases the termination efficiency of RF1.

It localises to the cytoplasm. In terms of biological role, peptide chain release factor 1 directs the termination of translation in response to the peptide chain termination codons UAG and UAA. This Solidesulfovibrio magneticus (strain ATCC 700980 / DSM 13731 / RS-1) (Desulfovibrio magneticus) protein is Peptide chain release factor 1.